The chain runs to 278 residues: Malonyl-[acyl-carrier protein] O-methyltransferase (278 aa).

This sequence belongs to the methyltransferase superfamily.

The enzyme catalyses malonyl-[ACP] + S-adenosyl-L-methionine = malonyl-[ACP] methyl ester + S-adenosyl-L-homocysteine. The protein operates within cofactor biosynthesis; biotin biosynthesis. In terms of biological role, converts the free carboxyl group of a malonyl-thioester to its methyl ester by transfer of a methyl group from S-adenosyl-L-methionine (SAM). It allows to synthesize pimeloyl-ACP via the fatty acid synthetic pathway. The sequence is that of Malonyl-[acyl-carrier protein] O-methyltransferase from Brevibacillus brevis (strain 47 / JCM 6285 / NBRC 100599).